The sequence spans 85 residues: DNA-directed RNA polymerase subunit omega (85 aa).

It belongs to the RNA polymerase subunit omega family. The RNAP catalytic core consists of 2 alpha, 1 beta, 1 beta' and 1 omega subunit. When a sigma factor is associated with the core the holoenzyme is formed, which can initiate transcription.

The enzyme catalyses RNA(n) + a ribonucleoside 5'-triphosphate = RNA(n+1) + diphosphate. Its function is as follows. Promotes RNA polymerase assembly. Latches the N- and C-terminal regions of the beta' subunit thereby facilitating its interaction with the beta and alpha subunits. The polypeptide is DNA-directed RNA polymerase subunit omega (Tropheryma whipplei (strain TW08/27) (Whipple's bacillus)).